Reading from the N-terminus, the 151-residue chain is Putative pre-16S rRNA nuclease (151 aa).

This sequence belongs to the YqgF nuclease family.

The protein resides in the cytoplasm. Functionally, could be a nuclease involved in processing of the 5'-end of pre-16S rRNA. The chain is Putative pre-16S rRNA nuclease from Neisseria meningitidis serogroup C (strain 053442).